Reading from the N-terminus, the 545-residue chain is Chaperonin GroEL 4 (545 aa).

ATP-binding positions include 30 to 33, Lys51, 87 to 91, Gly415, and Asp495; these read TLGP and DGTTT.

Belongs to the chaperonin (HSP60) family. As to quaternary structure, forms a cylinder of 14 subunits composed of two heptameric rings stacked back-to-back. Interacts with the co-chaperonin GroES.

It is found in the cytoplasm. It catalyses the reaction ATP + H2O + a folded polypeptide = ADP + phosphate + an unfolded polypeptide.. Functionally, together with its co-chaperonin GroES, plays an essential role in assisting protein folding. The GroEL-GroES system forms a nano-cage that allows encapsulation of the non-native substrate proteins and provides a physical environment optimized to promote and accelerate protein folding. The chain is Chaperonin GroEL 4 from Rhizobium meliloti (strain 1021) (Ensifer meliloti).